A 268-amino-acid polypeptide reads, in one-letter code: 4-hydroxy-tetrahydrodipicolinate reductase (268 aa).

NAD(+) contacts are provided by residues 10 to 15 (GASGRM) and aspartate 36. Arginine 37 contributes to the NADP(+) binding site. NAD(+) is bound by residues 99-101 (GTT) and 123-126 (SANM). Catalysis depends on histidine 156, which acts as the Proton donor/acceptor. Histidine 157 contributes to the (S)-2,3,4,5-tetrahydrodipicolinate binding site. Lysine 160 acts as the Proton donor in catalysis. Residue 166 to 167 (GT) coordinates (S)-2,3,4,5-tetrahydrodipicolinate.

This sequence belongs to the DapB family.

It localises to the cytoplasm. It carries out the reaction (S)-2,3,4,5-tetrahydrodipicolinate + NAD(+) + H2O = (2S,4S)-4-hydroxy-2,3,4,5-tetrahydrodipicolinate + NADH + H(+). The enzyme catalyses (S)-2,3,4,5-tetrahydrodipicolinate + NADP(+) + H2O = (2S,4S)-4-hydroxy-2,3,4,5-tetrahydrodipicolinate + NADPH + H(+). It functions in the pathway amino-acid biosynthesis; L-lysine biosynthesis via DAP pathway; (S)-tetrahydrodipicolinate from L-aspartate: step 4/4. In terms of biological role, catalyzes the conversion of 4-hydroxy-tetrahydrodipicolinate (HTPA) to tetrahydrodipicolinate. In Burkholderia mallei (strain NCTC 10247), this protein is 4-hydroxy-tetrahydrodipicolinate reductase.